A 464-amino-acid polypeptide reads, in one-letter code: Armadillo repeat-containing protein 6 homolog (464 aa).

Residue Thr9 is modified to Phosphothreonine. ARM repeat units lie at residues 235–275 (AHEH…TLAV), 287–331 (GGLK…QQGV), 332–374 (APII…FDTG), and 375–418 (IAEV…ISFG).

The protein belongs to the ARMC6 family.

This is Armadillo repeat-containing protein 6 homolog from Drosophila melanogaster (Fruit fly).